We begin with the raw amino-acid sequence, 67 residues long: Guanine nucleotide-binding protein G(I)/G(S)/G(O) subunit gamma-13 (67 aa).

A Cysteine methyl ester modification is found at C64. The S-farnesyl cysteine moiety is linked to residue C64. A propeptide spans 65–67 (TIL) (removed in mature form).

The protein belongs to the G protein gamma family. As to quaternary structure, g proteins are composed of 3 units, alpha, beta and gamma.

The protein resides in the cell membrane. Functionally, guanine nucleotide-binding proteins (G proteins) are involved as a modulator or transducer in various transmembrane signaling systems. The beta and gamma chains are required for the GTPase activity, for replacement of GDP by GTP, and for G protein-effector interaction. This chain is Guanine nucleotide-binding protein G(I)/G(S)/G(O) subunit gamma-13 (Gng13), found in Mus musculus (Mouse).